The primary structure comprises 433 residues: Phosphomethylpyrimidine synthase (433 aa).

Substrate contacts are provided by residues Asn66, Met94, Tyr123, His162, Ser184 to Gly186, Asp225 to Arg228, and Glu264. His268 is a binding site for Zn(2+). A substrate-binding site is contributed by Tyr291. His332 contacts Zn(2+). Residues Cys408, Cys411, and Cys415 each contribute to the [4Fe-4S] cluster site.

It belongs to the ThiC family. It depends on [4Fe-4S] cluster as a cofactor.

It carries out the reaction 5-amino-1-(5-phospho-beta-D-ribosyl)imidazole + S-adenosyl-L-methionine = 4-amino-2-methyl-5-(phosphooxymethyl)pyrimidine + CO + 5'-deoxyadenosine + formate + L-methionine + 3 H(+). Its pathway is cofactor biosynthesis; thiamine diphosphate biosynthesis. Catalyzes the synthesis of the hydroxymethylpyrimidine phosphate (HMP-P) moiety of thiamine from aminoimidazole ribotide (AIR) in a radical S-adenosyl-L-methionine (SAM)-dependent reaction. The chain is Phosphomethylpyrimidine synthase from Saccharolobus islandicus (strain M.14.25 / Kamchatka #1) (Sulfolobus islandicus).